A 179-amino-acid chain; its full sequence is Large ribosomal subunit protein uL5 (179 aa).

The protein belongs to the universal ribosomal protein uL5 family. In terms of assembly, part of the 50S ribosomal subunit; part of the 5S rRNA/L5/L18/L25 subcomplex. Contacts the 5S rRNA and the P site tRNA. Forms a bridge to the 30S subunit in the 70S ribosome.

In terms of biological role, this is one of the proteins that bind and probably mediate the attachment of the 5S RNA into the large ribosomal subunit, where it forms part of the central protuberance. In the 70S ribosome it contacts protein S13 of the 30S subunit (bridge B1b), connecting the 2 subunits; this bridge is implicated in subunit movement. Contacts the P site tRNA; the 5S rRNA and some of its associated proteins might help stabilize positioning of ribosome-bound tRNAs. The chain is Large ribosomal subunit protein uL5 from Thioalkalivibrio sulfidiphilus (strain HL-EbGR7).